The chain runs to 224 residues: Putative tyrosine-protein phosphatase OCA6 (224 aa).

Residue T2 is modified to Phosphothreonine. Positions 8–170 (QFSTVQPNLY…FNSEIEVDDL (163 aa)) constitute a Tyrosine-protein phosphatase domain. The active-site Phosphocysteine intermediate is the C114.

This sequence belongs to the protein-tyrosine phosphatase family.

The protein localises to the cytoplasm. It carries out the reaction O-phospho-L-tyrosyl-[protein] + H2O = L-tyrosyl-[protein] + phosphate. Required for replication of Brome mosaic virus (BMV). This is Putative tyrosine-protein phosphatase OCA6 (OCA6) from Saccharomyces cerevisiae (strain ATCC 204508 / S288c) (Baker's yeast).